The chain runs to 309 residues: uncharacterized protein (309 aa).

Positions 1–32 (MTGTAPVSRRQYLGTAGAIIGTTAGCLTGADA) form a signal peptide, tat-type signal.

Belongs to the bacterial solute-binding protein 1 family. WtpA subfamily. Predicted to be exported by the Tat system. The position of the signal peptide cleavage has not been experimentally proven.

This is an uncharacterized protein from Halobacterium salinarum (strain ATCC 700922 / JCM 11081 / NRC-1) (Halobacterium halobium).